Reading from the N-terminus, the 205-residue chain is Protease (205 aa).

Active-site residues include histidine 55, aspartate 72, and cysteine 122.

Belongs to the peptidase C5 family. Interacts with protease cofactor pVI-C; this interaction is necessary for protease activation.

The protein resides in the virion. Its subcellular location is the host nucleus. The enzyme catalyses Cleaves proteins of the adenovirus and its host cell at two consensus sites: -Yaa-Xaa-Gly-Gly-|-Xaa- and -Yaa-Xaa-Gly-Xaa-|-Gly- (in which Yaa is Met, Ile or Leu, and Xaa is any amino acid).. With respect to regulation, requires DNA and protease cofactor for maximal activation. Inside nascent virions, becomes partially activated by binding to the viral DNA, allowing it to cleave the cofactor that binds to the protease and fully activates it. Actin, like the viral protease cofactor, seems to act as a cofactor in the cleavage of cytokeratin 18 and of actin itself. In terms of biological role, cleaves viral precursor proteins (pTP, pIIIa, pVI, pVII, pVIII, and pX) inside newly assembled particles giving rise to mature virions. Protease complexed to its cofactor slides along the viral DNA to specifically locate and cleave the viral precursors. Mature virions have a weakened organization compared to the unmature virions, thereby facilitating subsequent uncoating. Without maturation, the particle lacks infectivity and is unable to uncoat. Late in adenovirus infection, in the cytoplasm, may participate in the cytoskeleton destruction. Cleaves host cell cytoskeletal keratins K7 and K18. This is Protease from Galliformes (FAdV-8).